The following is a 221-amino-acid chain: Ribosome maturation factor RimM (221 aa).

The segment at 1 to 23 (MTERKQGAAAPRPLNRPQGESPK) is disordered. The PRC barrel domain occupies 144–221 (ENEFYWVDLI…RIVVDWGLDY (78 aa)).

It belongs to the RimM family. In terms of assembly, binds ribosomal protein uS19.

It is found in the cytoplasm. In terms of biological role, an accessory protein needed during the final step in the assembly of 30S ribosomal subunit, possibly for assembly of the head region. Essential for efficient processing of 16S rRNA. May be needed both before and after RbfA during the maturation of 16S rRNA. It has affinity for free ribosomal 30S subunits but not for 70S ribosomes. This Cupriavidus pinatubonensis (strain JMP 134 / LMG 1197) (Cupriavidus necator (strain JMP 134)) protein is Ribosome maturation factor RimM.